The following is a 263-amino-acid chain: Indole-3-glycerol phosphate synthase (263 aa).

The protein belongs to the TrpC family.

It carries out the reaction 1-(2-carboxyphenylamino)-1-deoxy-D-ribulose 5-phosphate + H(+) = (1S,2R)-1-C-(indol-3-yl)glycerol 3-phosphate + CO2 + H2O. The protein operates within amino-acid biosynthesis; L-tryptophan biosynthesis; L-tryptophan from chorismate: step 4/5. The polypeptide is Indole-3-glycerol phosphate synthase (Sulfurimonas denitrificans (strain ATCC 33889 / DSM 1251) (Thiomicrospira denitrificans (strain ATCC 33889 / DSM 1251))).